The chain runs to 145 residues: D-aminoacyl-tRNA deacylase (145 aa).

The Gly-cisPro motif, important for rejection of L-amino acids motif lies at 137–138 (GP).

The protein belongs to the DTD family. In terms of assembly, homodimer.

It is found in the cytoplasm. It catalyses the reaction glycyl-tRNA(Ala) + H2O = tRNA(Ala) + glycine + H(+). The catalysed reaction is a D-aminoacyl-tRNA + H2O = a tRNA + a D-alpha-amino acid + H(+). An aminoacyl-tRNA editing enzyme that deacylates mischarged D-aminoacyl-tRNAs. Also deacylates mischarged glycyl-tRNA(Ala), protecting cells against glycine mischarging by AlaRS. Acts via tRNA-based rather than protein-based catalysis; rejects L-amino acids rather than detecting D-amino acids in the active site. By recycling D-aminoacyl-tRNA to D-amino acids and free tRNA molecules, this enzyme counteracts the toxicity associated with the formation of D-aminoacyl-tRNA entities in vivo and helps enforce protein L-homochirality. This chain is D-aminoacyl-tRNA deacylase, found in Alcanivorax borkumensis (strain ATCC 700651 / DSM 11573 / NCIMB 13689 / SK2).